A 977-amino-acid polypeptide reads, in one-letter code: MASSHSSSPVPQGSSSDVFFKIEVDPSKHIRPVPSLPDVCPKEPTGDSHSLYVAPSLVTDQHRWTVYHSKVNLPAALNDPRLAKRESDFFTKTWGLDFVDTEVIPSFYLPQISKEHFTVYQQEISQREKIHERCKNICPPKDTFERTLLHTHDKSRTDLEQVPKIFMKPDFALDDSLTFNSVLPWSHFNTAGGKGNRDAASSKLLQEKLSHYLDIVEVNIAHQISLRSEAFFHAMTSQHELQDYLRKTSQAVKMLRDKIAQIDKVMCEGSLHILRLALTRNNCVKVYNKLKLMATVHQTQPTVQVLLSTSEFVGALDLIATTQEVLQQELQGIHSFRHLGSQLCELEKLIDKMMIAEFSTYSHSDLNRPLEDDCQVLEEERLISLVFGLLKQRKLNFLEIYGEKMVITAKNIIKQCVINKVSQTEEIDTDVVVKLADQMRMLNFPQWFDLLKDIFSKFTIFLQRVKATLNIIHSVVLSVLDKNQRTRELEEISQQKNAAKDNSLDTEVAYLIHEGMFISDAFGEGELTPIAVDTTSQRNASPNSEPCSSDSVSEPECTTDSSSSKEHTSSSAIPGGVDIMVSEDMKLTDSELGKLANNIQELLYSASDICHDRAVKFLMSRAKDGFLEKLNSMEFITLSRLMETFILDTEQICGRKSTSLLGALQSQAIKFVNRFHEERKTKLSLLLDNERWKQADVPAEFQDLVDSLSDGKIALPEKKSGATEERKPAEVLIVEGQQYAVVGTVLLLIRIILEYCQCVDNIPSVTTDMLTRLSDLLKYFNSRSCQLVLGAGALQVVGLKTITTKNLALSSRCLQLIVHYIPVIRAHFEARLPPKQYSMLRHFDHITKDYHDHIAEISAKLVAIMDSLFDKLLSKYEVKAPVPSACFRNICKQMTKMHEAIFDLLPEEQTQMLFLRINASYKLHLKKQLSHLNVINDGGPQNGLVTADVAFYTGNLQALKGLKDLDLNMAEIWEQKR.

Ser8 is modified (phosphoserine). Coiled-coil stretches lie at residues 240–260 (ELQD…DKIA) and 480–507 (LDKN…LDTE). A compositionally biased stretch (polar residues) spans 535 to 552 (TSQRNASPNSEPCSSDSV). The interval 535-575 (TSQRNASPNSEPCSSDSVSEPECTTDSSSSKEHTSSSAIPG) is disordered. A coiled-coil region spans residues 582–603 (SEDMKLTDSELGKLANNIQELL).

It belongs to the VPS54 family. As to quaternary structure, component of the Golgi-associated retrograde protein (GARP) complex, also called VFT (VPS fifty-three) complex, composed of VPS51, VPS52, VPS53 and VPS54. EIPR1 interacts with GARP complex and mediates its recruitment to the trans-Golgi network. Interacts with VPS51 in an EIPR1-independent manner.

It localises to the golgi apparatus. Its subcellular location is the trans-Golgi network. It is found in the membrane. Functionally, acts as a component of the GARP complex that is involved in retrograde transport from early and late endosomes to the trans-Golgi network (TGN). The GARP complex is required for the maintenance of the cycling of mannose 6-phosphate receptors between the TGN and endosomes, this cycling is necessary for proper lysosomal sorting of acid hydrolases such as CTSD. Within the GARP complex, required to tether the complex to the TGN. Not involved in endocytic recycling. The protein is Vacuolar protein sorting-associated protein 54 (VPS54) of Homo sapiens (Human).